Reading from the N-terminus, the 137-residue chain is Chaperone protein YscB (137 aa).

As to quaternary structure, interacts with SycN to form a complex which specifically binds to YopN.

Its subcellular location is the cytoplasm. The protein localises to the cell inner membrane. Functions as a specific chaperone for YopN. It could facilitate the secretion and the subsequent translocation of YopN. The chain is Chaperone protein YscB (yscB) from Yersinia enterocolitica.